The sequence spans 305 residues: Probable lipid kinase YegS-like (305 aa).

A DAGKc domain is found at 1-129 (MTQRRAMLIL…VDLGEVGGKL (129 aa)). ATP contacts are provided by residues threonine 39, 65–71 (GDGTLRD), and threonine 92. Leucine 210, aspartate 213, and leucine 215 together coordinate Mg(2+). Glutamate 268 functions as the Proton acceptor in the catalytic mechanism.

Belongs to the diacylglycerol/lipid kinase family. YegS lipid kinase subfamily. Mg(2+) serves as cofactor. Requires Ca(2+) as cofactor.

The protein resides in the cytoplasm. Probably phosphorylates lipids; the in vivo substrate is unknown. In Pseudomonas syringae pv. syringae (strain B728a), this protein is Probable lipid kinase YegS-like.